The primary structure comprises 203 residues: Holliday junction branch migration complex subunit RuvA (203 aa).

Positions 1–63 (MIGQLSGKVD…EEHIHLYGFL (63 aa)) are domain I. The tract at residues 64-142 (NLEEKIFFNL…KISSGSAIIK (79 aa)) is domain II. The segment at 143 to 149 (ESLNIKH) is flexible linker. Positions 150-203 (ITPVASNEVIKALVNLGFSRFEAQNAVQGIITQNPEISIDELIKTALKNRNSNF) are domain III.

This sequence belongs to the RuvA family. As to quaternary structure, homotetramer. Forms an RuvA(8)-RuvB(12)-Holliday junction (HJ) complex. HJ DNA is sandwiched between 2 RuvA tetramers; dsDNA enters through RuvA and exits via RuvB. An RuvB hexamer assembles on each DNA strand where it exits the tetramer. Each RuvB hexamer is contacted by two RuvA subunits (via domain III) on 2 adjacent RuvB subunits; this complex drives branch migration. In the full resolvosome a probable DNA-RuvA(4)-RuvB(12)-RuvC(2) complex forms which resolves the HJ.

The protein resides in the cytoplasm. Its function is as follows. The RuvA-RuvB-RuvC complex processes Holliday junction (HJ) DNA during genetic recombination and DNA repair, while the RuvA-RuvB complex plays an important role in the rescue of blocked DNA replication forks via replication fork reversal (RFR). RuvA specifically binds to HJ cruciform DNA, conferring on it an open structure. The RuvB hexamer acts as an ATP-dependent pump, pulling dsDNA into and through the RuvAB complex. HJ branch migration allows RuvC to scan DNA until it finds its consensus sequence, where it cleaves and resolves the cruciform DNA. The chain is Holliday junction branch migration complex subunit RuvA from Rickettsia africae (strain ESF-5).